The following is a 93-amino-acid chain: YcgL domain-containing protein swp_2294 (93 aa).

Residues 1 to 85 enclose the YcgL domain; sequence MICAVYKSLR…PVVNLLEQHK (85 aa).

This is YcgL domain-containing protein swp_2294 from Shewanella piezotolerans (strain WP3 / JCM 13877).